The following is a 293-amino-acid chain: Sodium-type flagellar protein MotY (293 aa).

The N-terminal stretch at 1–21 is a signal peptide; sequence MNKWLITSGVMLSLLSANSYA. One can recognise an OmpA-like domain in the interval 175-292; it reads YSFEDIAFTI…RVVISLGRTQ (118 aa).

The protein localises to the cell membrane. In terms of biological role, may play the role of a stator in the sodium flagellar motor, stabilizing the force-generating unit through direct interaction with the cell wall. The chain is Sodium-type flagellar protein MotY from Vibrio parahaemolyticus serotype O3:K6 (strain RIMD 2210633).